We begin with the raw amino-acid sequence, 256 residues long: Probable transcriptional regulatory protein cce_0894 (256 aa).

The protein belongs to the TACO1 family.

It is found in the cytoplasm. This is Probable transcriptional regulatory protein cce_0894 from Crocosphaera subtropica (strain ATCC 51142 / BH68) (Cyanothece sp. (strain ATCC 51142)).